The sequence spans 104 residues: Protein ArtA (104 aa).

The sequence is that of Protein ArtA (artA) from Escherichia coli (strain K12).